The following is a 361-amino-acid chain: Molybdenum import ATP-binding protein ModC (361 aa).

The ABC transporter domain occupies 1–228; sequence MLNINIEKQL…EQMRPWVPLQ (228 aa). 31-38 contributes to the ATP binding site; the sequence is GRSGAGKT. Residues 289 to 356 form the Mop domain; sequence GSSVRNLLRG…IKGVTMTQMD (68 aa).

Belongs to the ABC transporter superfamily. Molybdate importer (TC 3.A.1.8) family. As to quaternary structure, the complex is composed of two ATP-binding proteins (ModC), two transmembrane proteins (ModB) and a solute-binding protein (ModA).

It localises to the cell inner membrane. It carries out the reaction molybdate(out) + ATP + H2O = molybdate(in) + ADP + phosphate + H(+). Its function is as follows. Part of the ABC transporter complex ModABC involved in molybdenum import. Responsible for energy coupling to the transport system. The polypeptide is Molybdenum import ATP-binding protein ModC (Shewanella sp. (strain MR-7)).